The following is a 291-amino-acid chain: Pyridoxal 5'-phosphate synthase subunit PdxS (291 aa).

Aspartate 23 provides a ligand contact to D-ribose 5-phosphate. Lysine 80 functions as the Schiff-base intermediate with D-ribose 5-phosphate in the catalytic mechanism. Glycine 152 contacts D-ribose 5-phosphate. Residue arginine 164 participates in D-glyceraldehyde 3-phosphate binding. Residues glycine 213 and 234–235 (GS) each bind D-ribose 5-phosphate.

Belongs to the PdxS/SNZ family. As to quaternary structure, in the presence of PdxT, forms a dodecamer of heterodimers.

It catalyses the reaction aldehydo-D-ribose 5-phosphate + D-glyceraldehyde 3-phosphate + L-glutamine = pyridoxal 5'-phosphate + L-glutamate + phosphate + 3 H2O + H(+). It participates in cofactor biosynthesis; pyridoxal 5'-phosphate biosynthesis. In terms of biological role, catalyzes the formation of pyridoxal 5'-phosphate from ribose 5-phosphate (RBP), glyceraldehyde 3-phosphate (G3P) and ammonia. The ammonia is provided by the PdxT subunit. Can also use ribulose 5-phosphate and dihydroxyacetone phosphate as substrates, resulting from enzyme-catalyzed isomerization of RBP and G3P, respectively. The sequence is that of Pyridoxal 5'-phosphate synthase subunit PdxS from Bifidobacterium longum (strain DJO10A).